The primary structure comprises 152 residues: Prefoldin subunit alpha (152 aa).

Residues 110–152 (ETQEEVDELESESQELEQQAQQMQQQMQQQQMQQMQQSQGDEE) form a disordered region. Residues 111–124 (TQEEVDELESESQE) show a composition bias toward acidic residues. Low complexity predominate over residues 125 to 152 (LEQQAQQMQQQMQQQQMQQMQQSQGDEE).

This sequence belongs to the prefoldin alpha subunit family. In terms of assembly, heterohexamer of two alpha and four beta subunits.

It localises to the cytoplasm. Molecular chaperone capable of stabilizing a range of proteins. Seems to fulfill an ATP-independent, HSP70-like function in archaeal de novo protein folding. This is Prefoldin subunit alpha from Halorubrum lacusprofundi (strain ATCC 49239 / DSM 5036 / JCM 8891 / ACAM 34).